We begin with the raw amino-acid sequence, 311 residues long: MSLRIIFMGTPDFSVPTLRALVEAGHEIVAVYTQPPRPGGRRGLDLQKSPVHQVAELLGLPVLTPVNFKAEEDRQQFRDFNADVAVVVAYGLLLPEAILSGTRLGCYNGHASLLPRWRGAAPIQRAIMAGDAETGMMVMKMEKGLDTGPVALTAKVAIDENMTAGELHDSLMLAGARLMRQAMAKLEADDLPLVTQAEEGVLYAAKIDKGETRIDFSRPAQDVHNHIRGLSPFPGAWLEMDIGGKPERVKVLASELASGMGEAGSALDDALTIACGSDAVRLTRLQKAGGKPMSAADFVRGTPVPATTRLG.

112–115 lines the (6S)-5,6,7,8-tetrahydrofolate pocket; it reads SLLP.

It belongs to the Fmt family.

It catalyses the reaction L-methionyl-tRNA(fMet) + (6R)-10-formyltetrahydrofolate = N-formyl-L-methionyl-tRNA(fMet) + (6S)-5,6,7,8-tetrahydrofolate + H(+). In terms of biological role, attaches a formyl group to the free amino group of methionyl-tRNA(fMet). The formyl group appears to play a dual role in the initiator identity of N-formylmethionyl-tRNA by promoting its recognition by IF2 and preventing the misappropriation of this tRNA by the elongation apparatus. The protein is Methionyl-tRNA formyltransferase of Agrobacterium fabrum (strain C58 / ATCC 33970) (Agrobacterium tumefaciens (strain C58)).